We begin with the raw amino-acid sequence, 444 residues long: GTPase Der (444 aa).

EngA-type G domains lie at 2–167 (LKVA…LKEI) and 173–349 (FKFC…ENLN). Residues 8-15 (GKPNVGKS), 55-59 (DTGGL), 118-121 (NKSE), 179-186 (GRPNVGKS), 226-230 (DTAGI), and 291-294 (NKWD) each bind GTP. A KH-like domain is found at 350–434 (LKFNSKILTD…PITLYFKNKT (85 aa)).

This sequence belongs to the TRAFAC class TrmE-Era-EngA-EngB-Septin-like GTPase superfamily. EngA (Der) GTPase family. In terms of assembly, associates with the 50S ribosomal subunit.

Its function is as follows. GTPase that plays an essential role in the late steps of ribosome biogenesis. The chain is GTPase Der from Malacoplasma penetrans (strain HF-2) (Mycoplasma penetrans).